Consider the following 156-residue polypeptide: MEKIPMTRAGYDQLDEELRELRSVQRPAVIRAIAEAREHGDLSENAEYHAAREKQSFVEGRIKELEMILSRAEVIDPTRLNGSIKFGATVTLVDEDSEEERTYQIVGEAEADLERGLLNIRSPLARALIGKDEGDSIEVVTPGGGKSYEIISIRYV.

Residues 46-66 (AEYHAAREKQSFVEGRIKELE) are a coiled coil.

It belongs to the GreA/GreB family.

Necessary for efficient RNA polymerase transcription elongation past template-encoded arresting sites. The arresting sites in DNA have the property of trapping a certain fraction of elongating RNA polymerases that pass through, resulting in locked ternary complexes. Cleavage of the nascent transcript by cleavage factors such as GreA or GreB allows the resumption of elongation from the new 3'terminus. GreA releases sequences of 2 to 3 nucleotides. This is Transcription elongation factor GreA from Paracoccus denitrificans (strain Pd 1222).